A 358-amino-acid polypeptide reads, in one-letter code: Protein RecA (358 aa).

Residue 67–74 (GPESSGKT) participates in ATP binding.

This sequence belongs to the RecA family.

It is found in the cytoplasm. Can catalyze the hydrolysis of ATP in the presence of single-stranded DNA, the ATP-dependent uptake of single-stranded DNA by duplex DNA, and the ATP-dependent hybridization of homologous single-stranded DNAs. It interacts with LexA causing its activation and leading to its autocatalytic cleavage. In Xenorhabdus bovienii (Xenorhabdus nematophila subsp. bovienii), this protein is Protein RecA.